A 101-amino-acid chain; its full sequence is Replication restart protein PriB (101 aa).

Residues 1 to 101 (MTTNSLVLSG…IHAENVELKT (101 aa)) form the SSB domain.

The protein belongs to the PriB family. Homodimer. Interacts with PriA and DnaT. Component of the replication restart primosome. Primosome assembly occurs via a 'hand-off' mechanism. PriA binds to replication forks, subsequently PriB then DnaT bind; DnaT then displaces ssDNA to generate the helicase loading substrate.

Its function is as follows. Involved in the restart of stalled replication forks, which reloads the replicative helicase on sites other than the origin of replication; the PriA-PriB pathway is the major replication restart pathway. During primosome assembly it facilitates complex formation between PriA and DnaT on DNA; stabilizes PriA on DNA. Stimulates the DNA unwinding activity of PriA helicase. The polypeptide is Replication restart protein PriB (Shewanella putrefaciens (strain CN-32 / ATCC BAA-453)).